The sequence spans 338 residues: MSENAYAKSGVDVEAGYEVVSRIKKHVAKTERLGVLGALGGFGGSFDLSVLDVKEPVLISGTDGVGTKLMLAIQADKHDTIGIDCVAMCVNDIIAAGAEPLYFLDYIATGKNIPEKLEQVVAGVAEGCLQAGAALIGGETAEMPGMYDEDDYDLAGFAVGVAEKSQLIDGEKDVEAGDVLLGLASSGIHSNGYSLVRKVFSDFDLNESLPELDQSLIDTLLTPTKIYVKELLPLIKQNKIKGIAHITGGGFHENLPRMFGNSLSAEIVEGSWNILPIFKALEKYGDIKHEEMYEIFNMGIGMVIAVAPENAEALKKVLNAFEIGKMVKRQDSAVVIKK.

Belongs to the AIR synthase family.

Its subcellular location is the cytoplasm. It catalyses the reaction 2-formamido-N(1)-(5-O-phospho-beta-D-ribosyl)acetamidine + ATP = 5-amino-1-(5-phospho-beta-D-ribosyl)imidazole + ADP + phosphate + H(+). The protein operates within purine metabolism; IMP biosynthesis via de novo pathway; 5-amino-1-(5-phospho-D-ribosyl)imidazole from N(2)-formyl-N(1)-(5-phospho-D-ribosyl)glycinamide: step 2/2. The polypeptide is Phosphoribosylformylglycinamidine cyclo-ligase (Lactococcus lactis subsp. lactis (strain IL1403) (Streptococcus lactis)).